Here is a 414-residue protein sequence, read N- to C-terminus: Serine/threonine transporter SstT (414 aa).

8 consecutive transmembrane segments (helical) span residues 16–36, 46–66, 84–104, 143–163, 180–200, 219–239, 300–320, and 332–352; these read GSLV…AWIS, LGTL…LMLV, ILFL…VFSF, ALLN…GFAL, AVTF…FGLV, LVVL…LLVF, MAGA…TLGV, and VVAS…LLLI.

Belongs to the dicarboxylate/amino acid:cation symporter (DAACS) (TC 2.A.23) family.

It localises to the cell inner membrane. The catalysed reaction is L-serine(in) + Na(+)(in) = L-serine(out) + Na(+)(out). The enzyme catalyses L-threonine(in) + Na(+)(in) = L-threonine(out) + Na(+)(out). In terms of biological role, involved in the import of serine and threonine into the cell, with the concomitant import of sodium (symport system). The sequence is that of Serine/threonine transporter SstT from Salmonella schwarzengrund (strain CVM19633).